The following is a 443-amino-acid chain: Chromosomal replication initiator protein DnaA (443 aa).

A domain I, interacts with DnaA modulators region spans residues Met-1–Glu-80. Positions Glu-80–Phe-104 are domain II. The segment at Gln-105 to Lys-321 is domain III, AAA+ region. The ATP site is built by Gly-148, Gly-150, Lys-151, and Thr-152. The segment at Lys-322–Gln-443 is domain IV, binds dsDNA.

Belongs to the DnaA family. Oligomerizes as a right-handed, spiral filament on DNA at oriC.

It is found in the cytoplasm. Functionally, plays an essential role in the initiation and regulation of chromosomal replication. ATP-DnaA binds to the origin of replication (oriC) to initiate formation of the DNA replication initiation complex once per cell cycle. Binds the DnaA box (a 9 base pair repeat at the origin) and separates the double-stranded (ds)DNA. Forms a right-handed helical filament on oriC DNA; dsDNA binds to the exterior of the filament while single-stranded (ss)DNA is stabiized in the filament's interior. The ATP-DnaA-oriC complex binds and stabilizes one strand of the AT-rich DNA unwinding element (DUE), permitting loading of DNA polymerase. After initiation quickly degrades to an ADP-DnaA complex that is not apt for DNA replication. Binds acidic phospholipids. This chain is Chromosomal replication initiator protein DnaA, found in Leptospira interrogans serogroup Icterohaemorrhagiae serovar copenhageni (strain Fiocruz L1-130).